A 100-amino-acid chain; its full sequence is Large ribosomal subunit protein uL23 (100 aa).

Belongs to the universal ribosomal protein uL23 family. As to quaternary structure, part of the 50S ribosomal subunit. Contacts protein L29, and trigger factor when it is bound to the ribosome.

Its function is as follows. One of the early assembly proteins it binds 23S rRNA. One of the proteins that surrounds the polypeptide exit tunnel on the outside of the ribosome. Forms the main docking site for trigger factor binding to the ribosome. The sequence is that of Large ribosomal subunit protein uL23 from Parasynechococcus marenigrum (strain WH8102).